A 557-amino-acid chain; its full sequence is Enhancer of polycomb-like protein 1 (557 aa).

2 disordered regions span residues Val323–Pro349 and Gln424–Thr449. Residues Ala327–Lys337 are compositionally biased toward pro residues. Over residues Leu429–Ser441 the composition is skewed to low complexity.

Belongs to the enhancer of polycomb family. As to quaternary structure, component of the NuA4 histone acetyltransferase complex.

The protein localises to the nucleus. Functionally, component of the NuA4 histone acetyltransferase complex which is involved in transcriptional activation of selected genes principally by acetylation of nucleosomal histone H4 and H2A. The NuA4 complex is also involved in DNA repair. Involved in gene silencing by neighboring heterochromatin, blockage of the silencing spreading along the chromosome, and required for cell cycle progression through G2/M. The chain is Enhancer of polycomb-like protein 1 (epl1) from Schizosaccharomyces pombe (strain 972 / ATCC 24843) (Fission yeast).